Consider the following 393-residue polypeptide: MVTIGTPKSATATKVVLCGSGELGKEFVIELQRYGVEVIALDKYPDAPAMQVAHRSYVVSMLDGDALREIIEKEKPDYIVPEVEAIATRTLMELEEEGYHVIPTARATWLTMNREGIRRLAAEELGLPTSPYRFAETEEEFKEAVKVIGMPCVVKPIMSSSGHGQSVVREEKDIDRAWQYAQEGGRAGAGKVIVEGFVDFDYEITQLTVRHIGGTSFLEPVGHVQVDGDYRESWQPQAMSLAAKAKAREIAGKITEALGGRGIFGVELFIKGDDVIFSEVSPRPHDTGMVTMITQDLSQFALHARAVLGLPIPNIVFHGAGASRAVVVEGDSDRLSLGNLDKVLEQPDTQMRFFGKPEVHGHRRMAVLLARGLDVTEAREKTGVMMEQLNVKL.

N(1)-(5-phospho-beta-D-ribosyl)glycinamide contacts are provided by residues 22 to 23 (EL) and E82. Residues R114, K155, 160 to 165 (SSGHGQ), 195 to 198 (EGFV), and E203 contribute to the ATP site. The 190-residue stretch at 119–308 (RLAAEELGLP…QFALHARAVL (190 aa)) folds into the ATP-grasp domain. Mg(2+)-binding residues include E267 and E279. N(1)-(5-phospho-beta-D-ribosyl)glycinamide contacts are provided by residues D286, K356, and 363–364 (RR).

It belongs to the PurK/PurT family. Homodimer.

It carries out the reaction N(1)-(5-phospho-beta-D-ribosyl)glycinamide + formate + ATP = N(2)-formyl-N(1)-(5-phospho-beta-D-ribosyl)glycinamide + ADP + phosphate + H(+). The protein operates within purine metabolism; IMP biosynthesis via de novo pathway; N(2)-formyl-N(1)-(5-phospho-D-ribosyl)glycinamide from N(1)-(5-phospho-D-ribosyl)glycinamide (formate route): step 1/1. Its function is as follows. Involved in the de novo purine biosynthesis. Catalyzes the transfer of formate to 5-phospho-ribosyl-glycinamide (GAR), producing 5-phospho-ribosyl-N-formylglycinamide (FGAR). Formate is provided by PurU via hydrolysis of 10-formyl-tetrahydrofolate. The chain is Formate-dependent phosphoribosylglycinamide formyltransferase from Parabacteroides distasonis (strain ATCC 8503 / DSM 20701 / CIP 104284 / JCM 5825 / NCTC 11152).